The chain runs to 450 residues: D-inositol 3-phosphate glycosyltransferase (450 aa).

Residue His-26 coordinates 1D-myo-inositol 3-phosphate. Residues 32–33 (QP) and Gly-40 contribute to the UDP-N-acetyl-alpha-D-glucosamine site. 1D-myo-inositol 3-phosphate is bound by residues 37–42 (DAGGMN), Lys-95, Tyr-128, Thr-152, and Arg-172. UDP-N-acetyl-alpha-D-glucosamine contacts are provided by Arg-246, Lys-251, and Gln-313. Tyr-322, Arg-323, and Ala-325 together coordinate Mg(2+). Glu-335 and Glu-343 together coordinate UDP-N-acetyl-alpha-D-glucosamine. A Mg(2+)-binding site is contributed by Thr-349.

It belongs to the glycosyltransferase group 1 family. MshA subfamily. In terms of assembly, homodimer.

It catalyses the reaction 1D-myo-inositol 3-phosphate + UDP-N-acetyl-alpha-D-glucosamine = 1D-myo-inositol 2-acetamido-2-deoxy-alpha-D-glucopyranoside 3-phosphate + UDP + H(+). Functionally, catalyzes the transfer of a N-acetyl-glucosamine moiety to 1D-myo-inositol 3-phosphate to produce 1D-myo-inositol 2-acetamido-2-deoxy-glucopyranoside 3-phosphate in the mycothiol biosynthesis pathway. This Mycolicibacterium vanbaalenii (strain DSM 7251 / JCM 13017 / BCRC 16820 / KCTC 9966 / NRRL B-24157 / PYR-1) (Mycobacterium vanbaalenii) protein is D-inositol 3-phosphate glycosyltransferase.